A 601-amino-acid polypeptide reads, in one-letter code: Putative ankyrin repeat protein R841 (601 aa).

ANK repeat units lie at residues 17–50 (NNITSLMLAVSNYEIHDNYDTVKSLIDCGFDVNA), 54–86 (HGKSVLMYAINIDSDKNINVIKLLIDHGADVNH), 91–123 (QRSVLIHTCMYMEYGYNNKTISLLIDKGANINY), 165–197 (RENILMRIIKKLDNKYSITTIKLLLEHGINIDH), 201–234 (YGQTALMYACIYINGLKNIPIIKLLLEYGANINS), 238–269 (KGWSPLMSVFKNDIIDIKTIKFLVEKGAEINS), 274–310 (NETMLYVFCKKLSTRIYGQACVKIFDFLIKKGISIDN), 314–349 (KGYTPLMAFIIKISEYNEYTEKFIKLLLDYGANINS), 361–390 (VCCDVVSGSVSHCKIEIINTLIKYGADVNS), 397–427 (TILMNLRYSIHSENYITVLEILLRNGANPNI), 432–463 (YHKFPLLIDILNRGGELRIIKLMLQYNIDPNI), and 467–500 (IGNNALLFVAKHYKKNERFSFLKLLLTYGASYNC).

The protein is Putative ankyrin repeat protein R841 of Acanthamoeba polyphaga mimivirus (APMV).